The sequence spans 174 residues: Small ribosomal subunit protein uS5 (174 aa).

Residues 19 to 82 (LREKMVAINR…DEARRKMVKV (64 aa)) form the S5 DRBM domain.

This sequence belongs to the universal ribosomal protein uS5 family. In terms of assembly, part of the 30S ribosomal subunit. Contacts proteins S4 and S8.

With S4 and S12 plays an important role in translational accuracy. Its function is as follows. Located at the back of the 30S subunit body where it stabilizes the conformation of the head with respect to the body. In Azoarcus sp. (strain BH72), this protein is Small ribosomal subunit protein uS5.